We begin with the raw amino-acid sequence, 148 residues long: Large ribosomal subunit protein uL15 (148 aa).

Basic residues predominate over residues 1–30 (MPSKLRKTRKLRGHVSHGHGRIGKHRKHPG). Residues 1-38 (MPSKLRKTRKLRGHVSHGHGRIGKHRKHPGGRGNAGGM) are disordered.

The protein belongs to the universal ribosomal protein uL15 family. In terms of assembly, component of the large ribosomal subunit.

It localises to the cytoplasm. Its function is as follows. Component of the large ribosomal subunit. The ribosome is a large ribonucleoprotein complex responsible for the synthesis of proteins in the cell. This is Large ribosomal subunit protein uL15 (rpl27a) from Xenopus laevis (African clawed frog).